Reading from the N-terminus, the 849-residue chain is Autoinducer 1 sensor kinase/phosphatase LuxN (849 aa).

7 helical membrane-spanning segments follow: residues 9–29 (IVYA…MWLF), 41–61 (VIFG…IAWI), 160–180 (SYFF…LVAM), 196–216 (IAGI…MTYF), 220–242 (FSLT…YALL), 251–275 (YIAY…AIFI), and 283–301 (WLIA…QLLY). In terms of domain architecture, Histidine kinase spans 468-683 (SIAHEMRNPL…EFHLYFPVVP (216 aa)). H471 bears the Phosphohistidine; by autocatalysis mark. In terms of domain architecture, Response regulatory spans 722-835 (TVLIVDDKEV…ALRHVLGNWL (114 aa)). 4-aspartylphosphate is present on D771.

The protein resides in the cell inner membrane. It carries out the reaction ATP + protein L-histidine = ADP + protein N-phospho-L-histidine.. At low cell density, in the absence of AI-1 (autoinducer 1), LuxN has a kinase activity and autophosphorylates on His-471. The phosphoryl group is then transferred on Asp-771 of the response regulator domain. The phosphoryl group is transferred to LuxU, and ultimately to LuxO. At high cell density, in the presence of AI-1, the kinase activity is inactivated, and the response regulator domain has a phosphatase activity. LuxN phosphatase acts on itself. As LuxU could function to establish an equilibrium between the aspartyl-phosphate of LuxN and the aspartyl-phosphate of LuxO, LuxU transfers phosphate from LuxO to LuxN and finally phosphate is drained from the system. The sequence is that of Autoinducer 1 sensor kinase/phosphatase LuxN (luxN) from Vibrio harveyi (Beneckea harveyi).